Here is a 173-residue protein sequence, read N- to C-terminus: Large ribosomal subunit protein uL22c (173 aa).

The protein belongs to the universal ribosomal protein uL22 family. In terms of assembly, part of the 50S ribosomal subunit.

It is found in the plastid. The protein localises to the chloroplast. Its function is as follows. This protein binds specifically to 23S rRNA. The globular domain of the protein is located near the polypeptide exit tunnel on the outside of the subunit, while an extended beta-hairpin is found that lines the wall of the exit tunnel in the center of the 70S ribosome. In Drimys granadensis, this protein is Large ribosomal subunit protein uL22c (rpl22).